Reading from the N-terminus, the 322-residue chain is uncharacterized protein (322 aa).

The region spanning 26–267 (HFGHKVFKVA…CDQLEIIPPE (242 aa)) is the Radical SAM core domain. [4Fe-4S] cluster-binding residues include Cys-42, Cys-54, and Cys-57.

This sequence belongs to the radical SAM superfamily. [4Fe-4S] cluster is required as a cofactor.

This is an uncharacterized protein from Bacillus subtilis (strain 168).